The chain runs to 174 residues: ATP synthase subunit delta, sodium ion specific (174 aa).

Belongs to the ATPase delta chain family. In terms of assembly, F-type ATPases have 2 components, F(1) - the catalytic core - and F(0) - the membrane proton channel. F(1) has five subunits: alpha(3), beta(3), gamma(1), delta(1), epsilon(1). F(0) has three main subunits: a(1), b(2) and c(10-14). The alpha and beta chains form an alternating ring which encloses part of the gamma chain. F(1) is attached to F(0) by a central stalk formed by the gamma and epsilon chains, while a peripheral stalk is formed by the delta and b chains.

It localises to the cell inner membrane. In terms of biological role, f(1)F(0) ATP synthase produces ATP from ADP in the presence of a proton or sodium gradient. F-type ATPases consist of two structural domains, F(1) containing the extramembraneous catalytic core and F(0) containing the membrane proton channel, linked together by a central stalk and a peripheral stalk. During catalysis, ATP synthesis in the catalytic domain of F(1) is coupled via a rotary mechanism of the central stalk subunits to proton translocation. Functionally, this protein is part of the stalk that links CF(0) to CF(1). It either transmits conformational changes from CF(0) to CF(1) or is implicated in proton conduction. The protein is ATP synthase subunit delta, sodium ion specific of Ilyobacter tartaricus.